A 76-amino-acid polypeptide reads, in one-letter code: FMRFamide-related neuropeptides (76 aa).

Residues 1-27 (MCVQTRMLVAVAVVLVVLAVLSDPVSA) form the signal peptide. At Phe39 the chain carries Phenylalanine amide.

It belongs to the FARP (FMRFamide related peptide) family. In terms of tissue distribution, olfactory lobe and accessory lobe, olfactory globular tract, olfactory lobe cells (at protein level). Widely distributed throughout nervous system.

It is found in the secreted. In terms of biological role, GYRKPPFNGSIF-amide may be involved in olfaction and contraction of hindgut. The chain is FMRFamide-related neuropeptides from Procambarus clarkii (Red swamp crayfish).